Reading from the N-terminus, the 285-residue chain is HTH-type transcriptional regulator MurR (285 aa).

The HTH rpiR-type domain maps to 1 to 77 (MLYLTKIRNA…MALIGEYSAS (77 aa)). The H-T-H motif DNA-binding region spans 37–56 (SRKMAKQLGISQSSIVKFAQ). An SIS domain is found at 128–268 (IIEVISKAPF…FVGLVQLNDV (141 aa)).

Homotetramer.

It participates in amino-sugar metabolism; N-acetylmuramate degradation [regulation]. Functionally, represses the expression of the murPQ operon involved in the uptake and degradation of N-acetylmuramic acid (MurNAc). Binds to two adjacent inverted repeats within the operator region. MurNAc 6-phosphate, the substrate of MurQ, is the specific inducer that weakens binding of MurR to the operator. The polypeptide is HTH-type transcriptional regulator MurR (Escherichia coli O9:H4 (strain HS)).